Here is a 777-residue protein sequence, read N- to C-terminus: Zinc finger FYVE domain-containing protein 1 (777 aa).

Positions 416-777 (MAHSSFFPDE…FNCNKKPGDL (362 aa)) are required for localization in the lipid droplets. 2 FYVE-type zinc fingers span residues 598–659 (NSQI…DARN) and 715–775 (DHEI…KKPG). Residues C604, C607, C620, C623, C628, C631, C651, C654, C721, C724, C737, C740, C745, C748, C767, and C770 each contribute to the Zn(2+) site.

In terms of assembly, interacts with RAB18 (in GTP-bound form). Interacts with BSCL2 in a RAB18-dependent manner. Interacts with ZW10. Ubiquitous.

The protein resides in the golgi apparatus. The protein localises to the golgi stack. Its subcellular location is the endoplasmic reticulum. It is found in the preautophagosomal structure. It localises to the lipid droplet. The protein resides in the mitochondrion. Its function is as follows. Plays a role in the formation of lipid droplets (LDs) which are storage organelles at the center of lipid and energy homeostasis. Regulates the morphology, size and distribution of LDs. Mediates the formation of endoplasmic reticulum-lipid droplets (ER-LD) contact sites by forming a complex with RAB18 and ZW10. Binds to phosphatidylinositol 3-phosphate (PtdIns3P) through FYVE-type zinc finger. The chain is Zinc finger FYVE domain-containing protein 1 (Zfyve1) from Mus musculus (Mouse).